Reading from the N-terminus, the 390-residue chain is NADH-dependent butanol dehydrogenase B (390 aa).

It belongs to the iron-containing alcohol dehydrogenase family. In terms of assembly, homodimer.

The protein operates within alcohol metabolism; butanol biosynthesis. The protein is NADH-dependent butanol dehydrogenase B (bdhB) of Clostridium acetobutylicum (strain ATCC 824 / DSM 792 / JCM 1419 / IAM 19013 / LMG 5710 / NBRC 13948 / NRRL B-527 / VKM B-1787 / 2291 / W).